Reading from the N-terminus, the 418-residue chain is Gamma-glutamyl phosphate reductase (418 aa).

This sequence belongs to the gamma-glutamyl phosphate reductase family.

It is found in the cytoplasm. It carries out the reaction L-glutamate 5-semialdehyde + phosphate + NADP(+) = L-glutamyl 5-phosphate + NADPH + H(+). Its pathway is amino-acid biosynthesis; L-proline biosynthesis; L-glutamate 5-semialdehyde from L-glutamate: step 2/2. Functionally, catalyzes the NADPH-dependent reduction of L-glutamate 5-phosphate into L-glutamate 5-semialdehyde and phosphate. The product spontaneously undergoes cyclization to form 1-pyrroline-5-carboxylate. The polypeptide is Gamma-glutamyl phosphate reductase (Chlorobium chlorochromatii (strain CaD3)).